A 430-amino-acid polypeptide reads, in one-letter code: Small ribosomal subunit protein uS5m (430 aa).

In terms of domain architecture, S5 DRBM spans 218-282 (FDTRILEVRN…NRAVHHLHYI (65 aa)).

This sequence belongs to the universal ribosomal protein uS5 family. Component of the mitochondrial small ribosomal subunit (mt-SSU). Mature mammalian 55S mitochondrial ribosomes consist of a small (28S) and a large (39S) subunit. The 28S small subunit contains a 12S ribosomal RNA (12S mt-rRNA) and 30 different proteins. The 39S large subunit contains a 16S rRNA (16S mt-rRNA), a copy of mitochondrial valine transfer RNA (mt-tRNA(Val)), which plays an integral structural role, and 52 different proteins.

The protein localises to the mitochondrion. The sequence is that of Small ribosomal subunit protein uS5m (MRPS5) from Homo sapiens (Human).